The following is a 436-amino-acid chain: Deoxyuridine 5'-triphosphate nucleotidohydrolase (436 aa).

Residues 328 to 330 and 431 to 432 contribute to the substrate site; these read RSS and FG.

It belongs to the dUTPase family. The cofactor is Mg(2+).

The enzyme catalyses dUTP + H2O = dUMP + diphosphate + H(+). In terms of biological role, involved in nucleotide metabolism: produces dUMP, the immediate precursor of thymidine nucleotides and decreases the intracellular concentration of dUTP to avoid uracil incorporation into viral DNA. The sequence is that of Deoxyuridine 5'-triphosphate nucleotidohydrolase from Gallid herpesvirus 2 (strain Chicken/Md5/ATCC VR-987) (GaHV-2).